Reading from the N-terminus, the 138-residue chain is Histone H2B (138 aa).

The segment covering 1 to 10 (MPPKAAEKKP) has biased composition (basic and acidic residues). Positions 1-47 (MPPKAAEKKPSTAGKAPAGKAPEKKEAGKKTTAAGGEKKKRSKTRKE) are disordered. Residues lysine 8 and lysine 9 each carry the N6-acetyllysine; alternate modification. Glycyl lysine isopeptide (Lys-Gly) (interchain with G-Cter in SUMO); alternate cross-links involve residues lysine 8 and lysine 9. The segment covering 11–20 (STAGKAPAGK) has biased composition (low complexity). Lysine 15 carries the N6-acetyllysine modification. Lysine 24 is modified (N6-acetyllysine; alternate). Residue lysine 24 forms a Glycyl lysine isopeptide (Lys-Gly) (interchain with G-Cter in SUMO); alternate linkage. Lysine 25 participates in a covalent cross-link: Glycyl lysine isopeptide (Lys-Gly) (interchain with G-Cter in SUMO). A Glycyl lysine isopeptide (Lys-Gly) (interchain with G-Cter in ubiquitin) cross-link involves residue lysine 132.

Belongs to the histone H2B family. In terms of assembly, the nucleosome is a histone octamer containing two molecules each of H2A, H2B, H3 and H4 assembled in one H3-H4 heterotetramer and two H2A-H2B heterodimers. The octamer wraps approximately 147 bp of DNA. Post-translationally, monoubiquitinated to form H2BK123ub1. H2BK123ub1 gives a specific tag for epigenetic transcriptional activation and is also prerequisite for H3K4me and H3K79me formation. H2BK123ub1 also modulates the formation of double-strand breaks during meiosis and is a prerequisite for DNA-damage checkpoint activation. In terms of processing, acetylated by GCN5 to form H2BK11ac and H2BK16ac. H2BK16ac can also be formed by ESA1. Acetylation of N-terminal lysines and particularly formation of H2BK11acK16ac has a positive effect on transcription. Sumoylation to form H2BK6su or H2BK7su, and probably also H2BK16su or H2BK17su, occurs preferentially near the telomeres and represses gene transcription.

It localises to the nucleus. The protein resides in the chromosome. Its function is as follows. Core component of nucleosome. Nucleosomes wrap and compact DNA into chromatin, limiting DNA accessibility to the cellular machineries which require DNA as a template. Histones thereby play a central role in transcription regulation, DNA repair, DNA replication and chromosomal stability. DNA accessibility is regulated via a complex set of post-translational modifications of histones, also called histone code, and nucleosome remodeling. The polypeptide is Histone H2B (HTB1) (Ajellomyces capsulatus (Darling's disease fungus)).